The primary structure comprises 365 residues: Peptide chain release factor 2 (365 aa).

Gln-252 carries the post-translational modification N5-methylglutamine.

Belongs to the prokaryotic/mitochondrial release factor family. Methylated by PrmC. Methylation increases the termination efficiency of RF2.

Its subcellular location is the cytoplasm. Functionally, peptide chain release factor 2 directs the termination of translation in response to the peptide chain termination codons UGA and UAA. This Salmonella typhimurium (strain LT2 / SGSC1412 / ATCC 700720) protein is Peptide chain release factor 2 (prfB).